Reading from the N-terminus, the 202-residue chain is Glycerol-3-phosphate acyltransferase (202 aa).

Helical transmembrane passes span 3 to 23 (NLIIYAFIYLLGSIPFGLILA), 61 to 81 (IATIILDFAKAAIPLLILKFL), 87 to 107 (LLWSVAVLAIFGHCFSIYLLF), 118 to 138 (GAMIVLLPLEVLTAFIVWVVI), 144 to 164 (ISSLASLAALLAFVISSFIFN), and 167 to 187 (LEIHTHAPVFIIAFIIVYKHL).

Belongs to the PlsY family. In terms of assembly, probably interacts with PlsX.

It is found in the cell inner membrane. The enzyme catalyses an acyl phosphate + sn-glycerol 3-phosphate = a 1-acyl-sn-glycero-3-phosphate + phosphate. Its pathway is lipid metabolism; phospholipid metabolism. Functionally, catalyzes the transfer of an acyl group from acyl-phosphate (acyl-PO(4)) to glycerol-3-phosphate (G3P) to form lysophosphatidic acid (LPA). This enzyme utilizes acyl-phosphate as fatty acyl donor, but not acyl-CoA or acyl-ACP. The chain is Glycerol-3-phosphate acyltransferase from Campylobacter jejuni subsp. jejuni serotype O:6 (strain 81116 / NCTC 11828).